The sequence spans 306 residues: Non-structural protein 3 (306 aa).

This is Non-structural protein 3 (Segment-7) from Banna virus (BAV).